Here is a 117-residue protein sequence, read N- to C-terminus: Immunoglobulin kappa variable 1D-12 (117 aa).

Residues 1 to 22 (MDMMVPAQLLGLLLLWFPGSRC) form the signal peptide. A framework-1 region spans residues 23–45 (DIQMTQSPSSVSASVGDRVTITC). Positions 24 to 117 (IQMTQSPSSV…YYCQQANSFP (94 aa)) constitute an Ig-like domain. Cys-45 and Cys-110 form a disulfide bridge. The interval 46–56 (RASQGISSWLA) is complementarity-determining-1. Residues 57–71 (WYQQKPGKAPKLLIY) form a framework-2 region. Positions 72 to 78 (AASSLQS) are complementarity-determining-2. Positions 79–110 (GVPSRFSGSGSGTDFTLTISSLQPEDFATYYC) are framework-3. Positions 111-117 (QQANSFP) are complementarity-determining-3.

As to quaternary structure, immunoglobulins are composed of two identical heavy chains and two identical light chains; disulfide-linked.

The protein localises to the secreted. It localises to the cell membrane. Functionally, v region of the variable domain of immunoglobulin light chains that participates in the antigen recognition. Immunoglobulins, also known as antibodies, are membrane-bound or secreted glycoproteins produced by B lymphocytes. In the recognition phase of humoral immunity, the membrane-bound immunoglobulins serve as receptors which, upon binding of a specific antigen, trigger the clonal expansion and differentiation of B lymphocytes into immunoglobulins-secreting plasma cells. Secreted immunoglobulins mediate the effector phase of humoral immunity, which results in the elimination of bound antigens. The antigen binding site is formed by the variable domain of one heavy chain, together with that of its associated light chain. Thus, each immunoglobulin has two antigen binding sites with remarkable affinity for a particular antigen. The variable domains are assembled by a process called V-(D)-J rearrangement and can then be subjected to somatic hypermutations which, after exposure to antigen and selection, allow affinity maturation for a particular antigen. This Homo sapiens (Human) protein is Immunoglobulin kappa variable 1D-12.